The following is a 114-amino-acid chain: Ribosome-binding factor A (114 aa).

It belongs to the RbfA family. In terms of assembly, monomer. Binds 30S ribosomal subunits, but not 50S ribosomal subunits or 70S ribosomes.

The protein localises to the cytoplasm. In terms of biological role, one of several proteins that assist in the late maturation steps of the functional core of the 30S ribosomal subunit. Associates with free 30S ribosomal subunits (but not with 30S subunits that are part of 70S ribosomes or polysomes). Required for efficient processing of 16S rRNA. May interact with the 5'-terminal helix region of 16S rRNA. In Listeria welshimeri serovar 6b (strain ATCC 35897 / DSM 20650 / CCUG 15529 / CIP 8149 / NCTC 11857 / SLCC 5334 / V8), this protein is Ribosome-binding factor A.